A 305-amino-acid polypeptide reads, in one-letter code: Oxygen-dependent coproporphyrinogen-III oxidase (305 aa).

Ser94 contacts substrate. 2 residues coordinate a divalent metal cation: His98 and His108. Residue His108 is the Proton donor of the active site. 110–112 (NVR) is a substrate binding site. A divalent metal cation is bound by residues His147 and His177. The important for dimerization stretch occupies residues 242-277 (YVEFNLVYDRGTLFGLQTGGRTESILMSMPPLVRWE). Position 260–262 (260–262 (GGR)) interacts with substrate.

The protein belongs to the aerobic coproporphyrinogen-III oxidase family. As to quaternary structure, homodimer. The cofactor is a divalent metal cation.

The protein resides in the cytoplasm. It carries out the reaction coproporphyrinogen III + O2 + 2 H(+) = protoporphyrinogen IX + 2 CO2 + 2 H2O. It participates in porphyrin-containing compound metabolism; protoporphyrin-IX biosynthesis; protoporphyrinogen-IX from coproporphyrinogen-III (O2 route): step 1/1. Functionally, involved in the heme biosynthesis. Catalyzes the aerobic oxidative decarboxylation of propionate groups of rings A and B of coproporphyrinogen-III to yield the vinyl groups in protoporphyrinogen-IX. The sequence is that of Oxygen-dependent coproporphyrinogen-III oxidase from Shewanella denitrificans (strain OS217 / ATCC BAA-1090 / DSM 15013).